The sequence spans 419 residues: Multiple organellar RNA editing factor 1, mitochondrial (419 aa).

Residues 1 to 60 (MAMISHRLRRALLTATSYVNRSISSSITPASDFPSVSAAVLKRSVIGRSTEVATRAPARL) constitute a mitochondrion transit peptide. Positions 174 to 401 (KEYGGDKYEN…AGQPGSDQVR (228 aa)) are disordered. Residues 237 to 252 (GPQQGYATPGQGQGTQ) show a composition bias toward low complexity. The span at 310–327 (GQGGSGNYSQGPQGGYNQ) shows a compositional bias: gly residues. Residues 342 to 356 (GPASGAGNLGPAPGA) are compositionally biased toward low complexity. Residues 357 to 367 (GNPGYGQGYSG) show a composition bias toward gly residues. Residues 371-401 (EQNQTFPQADQRNRDWNNNNPAGQPGSDQVR) show a composition bias toward polar residues.

Belongs to the MORF family. As to quaternary structure, homodimer and heterodimer with MORF3. Heterodimers with MORF8/RIP1, MORF4/RIP4 and MORF6/RIP6. Interacts with PCMP-E90/MEF13. Interacts with PCMP-H13/MEF35.

It localises to the mitochondrion. Its function is as follows. Involved in organellar RNA editing. Required for the processing of numerous RNA editing sites in mitochondria. Binds to the mitochondrial MEF19 and MEF21 factors, two pentatricopeptide repeat-containing proteins involved in RNA editing. The protein is Multiple organellar RNA editing factor 1, mitochondrial of Arabidopsis thaliana (Mouse-ear cress).